A 190-amino-acid polypeptide reads, in one-letter code: Ribose 1,5-bisphosphate phosphokinase PhnN (190 aa).

The interval 135-159 (RGREPEPGIGQRLARPDPAPGHQAD) is disordered.

Belongs to the ribose 1,5-bisphosphokinase family.

The catalysed reaction is alpha-D-ribose 1,5-bisphosphate + ATP = 5-phospho-alpha-D-ribose 1-diphosphate + ADP. Its pathway is metabolic intermediate biosynthesis; 5-phospho-alpha-D-ribose 1-diphosphate biosynthesis; 5-phospho-alpha-D-ribose 1-diphosphate from D-ribose 5-phosphate (route II): step 3/3. Its function is as follows. Catalyzes the phosphorylation of ribose 1,5-bisphosphate to 5-phospho-D-ribosyl alpha-1-diphosphate (PRPP). The polypeptide is Ribose 1,5-bisphosphate phosphokinase PhnN (Pseudofrankia inefficax (strain DSM 45817 / CECT 9037 / DDB 130130 / EuI1c) (Frankia inefficax)).